Here is a 482-residue protein sequence, read N- to C-terminus: Catalase (482 aa).

Catalysis depends on residues histidine 53 and asparagine 126. Heme is bound at residue tyrosine 336.

Belongs to the catalase family. It depends on heme as a cofactor.

It is found in the periplasm. The catalysed reaction is 2 H2O2 = O2 + 2 H2O. Decomposes hydrogen peroxide into water and oxygen; serves to protect cells from the toxic effects of hydrogen peroxide. Could protect cells in nodules which have a high potential to produce hydrogen peroxide because of the strong reducing conditions required for nitrogen fixation and the action of several proteins. In Aliivibrio fischeri (strain ATCC 700601 / ES114) (Vibrio fischeri), this protein is Catalase (katA).